A 156-amino-acid polypeptide reads, in one-letter code: Small ribosomal subunit protein uS7 (156 aa).

It belongs to the universal ribosomal protein uS7 family. In terms of assembly, part of the 30S ribosomal subunit. Contacts proteins S9 and S11.

In terms of biological role, one of the primary rRNA binding proteins, it binds directly to 16S rRNA where it nucleates assembly of the head domain of the 30S subunit. Is located at the subunit interface close to the decoding center, probably blocks exit of the E-site tRNA. This chain is Small ribosomal subunit protein uS7, found in Acidithiobacillus ferrooxidans (strain ATCC 53993 / BNL-5-31) (Leptospirillum ferrooxidans (ATCC 53993)).